We begin with the raw amino-acid sequence, 505 residues long: Histidine--tRNA ligase (505 aa).

The protein belongs to the class-II aminoacyl-tRNA synthetase family. As to quaternary structure, homodimer.

It localises to the cytoplasm. It carries out the reaction tRNA(His) + L-histidine + ATP = L-histidyl-tRNA(His) + AMP + diphosphate + H(+). The protein is Histidine--tRNA ligase of Jannaschia sp. (strain CCS1).